Consider the following 554-residue polypeptide: Hydroxylamine reductase (554 aa).

[2Fe-2S] cluster contacts are provided by Cys-3, Cys-6, Cys-18, and Cys-25. Hybrid [4Fe-2O-2S] cluster is bound by residues His-252, Glu-276, Cys-320, Cys-408, Cys-436, Cys-461, Glu-495, and Lys-497. Cys-408 bears the Cysteine persulfide mark.

This sequence belongs to the HCP family. It depends on [2Fe-2S] cluster as a cofactor. The cofactor is hybrid [4Fe-2O-2S] cluster.

It is found in the cytoplasm. It catalyses the reaction A + NH4(+) + H2O = hydroxylamine + AH2 + H(+). In terms of biological role, catalyzes the reduction of hydroxylamine to form NH(3) and H(2)O. The chain is Hydroxylamine reductase from Shewanella baltica (strain OS185).